The following is a 697-amino-acid chain: Elongation factor G 2 (697 aa).

The region spanning 5–280 (SKYRNIGIFA…AVVDYLPAPD (276 aa)) is the tr-type G domain. GTP is bound by residues 14–21 (AHVDAGKT), 78–82 (DTPGH), and 132–135 (NKLD).

The protein belongs to the TRAFAC class translation factor GTPase superfamily. Classic translation factor GTPase family. EF-G/EF-2 subfamily.

The protein localises to the cytoplasm. Catalyzes the GTP-dependent ribosomal translocation step during translation elongation. During this step, the ribosome changes from the pre-translocational (PRE) to the post-translocational (POST) state as the newly formed A-site-bound peptidyl-tRNA and P-site-bound deacylated tRNA move to the P and E sites, respectively. Catalyzes the coordinated movement of the two tRNA molecules, the mRNA and conformational changes in the ribosome. In Shewanella denitrificans (strain OS217 / ATCC BAA-1090 / DSM 15013), this protein is Elongation factor G 2.